Here is a 285-residue protein sequence, read N- to C-terminus: Pantothenate synthetase (285 aa).

30-37 (MGFLHEGH) is an ATP binding site. His-37 functions as the Proton donor in the catalytic mechanism. Gln-61 serves as a coordination point for (R)-pantoate. Gln-61 contacts beta-alanine. 147–150 (GQKD) lines the ATP pocket. Gln-153 is a binding site for (R)-pantoate. Residues Val-176 and 184 to 187 (KSSR) contribute to the ATP site.

It belongs to the pantothenate synthetase family. As to quaternary structure, homodimer.

It is found in the cytoplasm. The catalysed reaction is (R)-pantoate + beta-alanine + ATP = (R)-pantothenate + AMP + diphosphate + H(+). It participates in cofactor biosynthesis; (R)-pantothenate biosynthesis; (R)-pantothenate from (R)-pantoate and beta-alanine: step 1/1. Catalyzes the condensation of pantoate with beta-alanine in an ATP-dependent reaction via a pantoyl-adenylate intermediate. The protein is Pantothenate synthetase of Listeria innocua serovar 6a (strain ATCC BAA-680 / CLIP 11262).